The chain runs to 351 residues: Biotin synthase (351 aa).

The Radical SAM core domain occupies 48 to 265; it reads NKVRIHILDN…LCMFRLINPD (218 aa). Residues C63, C67, and C70 each coordinate [4Fe-4S] cluster. Residues C107, C139, C199, and R269 each coordinate [2Fe-2S] cluster.

It belongs to the radical SAM superfamily. Biotin synthase family. Homodimer. The cofactor is [4Fe-4S] cluster. [2Fe-2S] cluster is required as a cofactor.

The catalysed reaction is (4R,5S)-dethiobiotin + (sulfur carrier)-SH + 2 reduced [2Fe-2S]-[ferredoxin] + 2 S-adenosyl-L-methionine = (sulfur carrier)-H + biotin + 2 5'-deoxyadenosine + 2 L-methionine + 2 oxidized [2Fe-2S]-[ferredoxin]. The protein operates within cofactor biosynthesis; biotin biosynthesis; biotin from 7,8-diaminononanoate: step 2/2. Functionally, catalyzes the conversion of dethiobiotin (DTB) to biotin by the insertion of a sulfur atom into dethiobiotin via a radical-based mechanism. In Leptospira interrogans serogroup Icterohaemorrhagiae serovar copenhageni (strain Fiocruz L1-130), this protein is Biotin synthase.